A 427-amino-acid chain; its full sequence is Probable G-protein coupled receptor 150 (427 aa).

Residues M1 to D3 are Extracellular-facing. Residues P4–W24 form a helical membrane-spanning segment. Residues S25–R50 are Cytoplasmic-facing. Residues I51 to L71 form a helical membrane-spanning segment. Residues C72 to K89 are Extracellular-facing. The helical transmembrane segment at M90–L110 threads the bilayer. Residues S111 to R170 lie on the Cytoplasmic side of the membrane. The chain crosses the membrane as a helical span at residues A171–V191. Topologically, residues R192–A230 are extracellular. Residues I231–V251 traverse the membrane as a helical segment. Topologically, residues W252 to S286 are cytoplasmic. Residues L287–A307 traverse the membrane as a helical segment. Residues R308–V327 are Extracellular-facing. The chain crosses the membrane as a helical span at residues A328–F348. The Cytoplasmic segment spans residues Q349–F427. The disordered stretch occupies residues E402–F427. A compositionally biased stretch (pro residues) spans R410–C421.

The protein belongs to the G-protein coupled receptor 1 family.

The protein resides in the cell membrane. Its function is as follows. Orphan receptor. The protein is Probable G-protein coupled receptor 150 (Gpr150) of Mus musculus (Mouse).